A 795-amino-acid polypeptide reads, in one-letter code: Volume-regulated anion channel subunit LRRC8E (795 aa).

Topologically, residues methionine 1 to proline 22 are cytoplasmic. Residues tryptophan 23–cysteine 43 traverse the membrane as a helical segment. At threonine 44–lysine 116 the chain is on the extracellular side. A disulfide bridge links cysteine 54 with cysteine 300. An N-linked (GlcNAc...) asparagine glycan is attached at asparagine 63. Residues tyrosine 117–phenylalanine 137 form a helical membrane-spanning segment. The Cytoplasmic portion of the chain corresponds to lysine 138–lysine 264. Residues phenylalanine 265–cysteine 285 traverse the membrane as a helical segment. Topologically, residues arginine 286 to alanine 312 are extracellular. Residue asparagine 301 is glycosylated (N-linked (GlcNAc...) asparagine). The helical transmembrane segment at phenylalanine 313–leucine 333 threads the bilayer. Residues phenylalanine 334–glutamate 795 are Cytoplasmic-facing. LRR repeat units follow at residues glutamine 535 to alanine 556, histidine 558 to lysine 578, valine 582 to leucine 603, alanine 605 to glutamine 626, lysine 630 to leucine 651, serine 653 to cysteine 674, glycine 676 to leucine 697, serine 699 to cysteine 720, lysine 722 to glutamine 744, and alanine 745 to cysteine 766.

The protein belongs to the LRRC8 family. In terms of assembly, heterohexamer; oligomerizes with other LRRC8 proteins (LRRC8A, LRRC8C, LRRC8D and/or LRRC8B) to form a heterohexamer. In vivo, the subunit composition may depend primarily on expression levels, and heterooligomeric channels containing various proportions of the different LRRC8 proteins may coexist.

Its subcellular location is the cell membrane. It is found in the endoplasmic reticulum membrane. The protein localises to the lysosome membrane. It catalyses the reaction chloride(in) = chloride(out). The enzyme catalyses iodide(out) = iodide(in). It carries out the reaction taurine(out) = taurine(in). The catalysed reaction is 2',3'-cGAMP(out) = 2',3'-cGAMP(in). In terms of biological role, non-essential component of the volume-regulated anion channel (VRAC, also named VSOAC channel), an anion channel required to maintain a constant cell volume in response to extracellular or intracellular osmotic changes. The VRAC channel conducts iodide better than chloride and can also conduct organic osmolytes like taurine. Mediates efflux of amino acids, such as aspartate, in response to osmotic stress. The VRAC channel also mediates transport of immunoreactive cyclic dinucleotide GMP-AMP (2'-3'-cGAMP), an immune messenger produced in response to DNA virus in the cytosol. Channel activity requires LRRC8A plus at least one other family member (LRRC8B, LRRC8C, LRRC8D or LRRC8E); channel characteristics depend on the precise subunit composition. Also plays a role in lysosome homeostasis by forming functional lysosomal VRAC channels in response to low cytoplasmic ionic strength condition: lysosomal VRAC channels are necessary for the formation of large lysosome-derived vacuoles, which store and then expel excess water to maintain cytosolic water homeostasis. This chain is Volume-regulated anion channel subunit LRRC8E, found in Mus musculus (Mouse).